Reading from the N-terminus, the 182-residue chain is Transcription antitermination protein NusB (182 aa).

The interval 159-182 is disordered; sequence TPVENSEAEAAGYPVEESIEEDSQ.

It belongs to the NusB family.

Functionally, involved in transcription antitermination. Required for transcription of ribosomal RNA (rRNA) genes. Binds specifically to the boxA antiterminator sequence of the ribosomal RNA (rrn) operons. The protein is Transcription antitermination protein NusB of Corynebacterium diphtheriae (strain ATCC 700971 / NCTC 13129 / Biotype gravis).